Consider the following 507-residue polypeptide: Proton-coupled zinc antiporter SLC30A1 (507 aa).

The Cytoplasmic portion of the chain corresponds to methionine 1 to arginine 10. A helical membrane pass occupies residues leucine 11–valine 31. Topologically, residues threonine 32 to leucine 35 are extracellular. A helical membrane pass occupies residues alanine 36–valine 56. Histidine 43 and aspartate 47 together coordinate Zn(2+). At alanine 57–glutamate 78 the chain is on the cytoplasmic side. Residues valine 79–glutamate 99 form a helical membrane-spanning segment. The Extracellular segment spans residues alanine 100 to proline 113. The chain crosses the membrane as a helical span at residues leucine 114–phenylalanine 134. The Cytoplasmic portion of the chain corresponds to histidine 135–valine 247. Positions glutamate 140 to aspartate 218 are disordered. The segment at glycine 145–histidine 156 is 6 X 2 AA approximate repeats of H-G. The span at glycine 147–glycine 165 shows a compositional bias: basic residues. A compositionally biased stretch (polar residues) spans threonine 188–glycine 200. A compositionally biased stretch (basic and acidic residues) spans aspartate 204 to aspartate 215. A helical membrane pass occupies residues phenylalanine 248–phenylalanine 268. Residues histidine 250 and aspartate 254 each contribute to the Zn(2+) site. Over tyrosine 269–alanine 307 the chain is Extracellular. Asparagine 298 carries N-linked (GlcNAc...) asparagine glycosylation. The chain crosses the membrane as a helical span at residues glycine 308–leucine 328. Residues tyrosine 329 to leucine 507 are Cytoplasmic-facing. A Phosphoserine modification is found at serine 506.

Belongs to the cation diffusion facilitator (CDF) transporter (TC 2.A.4) family. SLC30A subfamily. In terms of assembly, homodimer. Interacts with TMEM163. Interacts and forms a complex with TMC6 and TMC8; the interaction regulates zinc transport into the ER. In terms of tissue distribution, widely expressed. Detected in duodenum and jejunum but not in ileum and colon (at protein level). Expressed by neuroglial cells (at protein level).

It is found in the cell membrane. It localises to the basolateral cell membrane. The protein resides in the cytoplasmic vesicle membrane. Its subcellular location is the cytoplasm. The protein localises to the endoplasmic reticulum membrane. It is found in the golgi apparatus membrane. It localises to the nucleus membrane. It carries out the reaction Zn(2+)(in) + 2 H(+)(out) = Zn(2+)(out) + 2 H(+)(in). Its activity is regulated as follows. Calcium-dependent. In terms of biological role, zinc ion:proton antiporter that could function at the plasma membrane mediating zinc efflux from cells against its electrochemical gradient protecting them from intracellular zinc accumulation and toxicity. Alternatively, could prevent the transport to the plasma membrane of CACNB2, the L-type calcium channels regulatory subunit, through a yet to be defined mechanism. By modulating the expression of these channels at the plasma membrane, could prevent calcium and zinc influx into cells. By the same mechanism, could also prevent L-type calcium channels-mediated heavy metal influx into cells. In some cells, could also function as a zinc ion:proton antiporter mediating zinc entry into the lumen of cytoplasmic vesicles. In macrophages, can increase zinc ions concentration into the lumen of cytoplasmic vesicles containing engulfed bacteria and could help inactivate them. Forms a complex with TMC6/EVER1 and TMC8/EVER2 at the ER membrane of keratynocytes which facilitates zinc uptake into the ER. Down-regulates the activity of transcription factors induced by zinc and cytokines. In Rattus norvegicus (Rat), this protein is Proton-coupled zinc antiporter SLC30A1.